The primary structure comprises 132 residues: Small ribosomal subunit protein uS11 (132 aa).

This sequence belongs to the universal ribosomal protein uS11 family. In terms of assembly, part of the 30S ribosomal subunit.

Located on the platform of the 30S subunit. In Korarchaeum cryptofilum (strain OPF8), this protein is Small ribosomal subunit protein uS11 (rps11).